We begin with the raw amino-acid sequence, 910 residues long: UPF0182 protein Acid_6445 (910 aa).

7 consecutive transmembrane segments (helical) span residues 17–37 (ITLL…AGYA), 56–76 (LYYG…ALWI), 101–121 (LALL…WTVV), 157–177 (LLRS…WIAA), 210–229 (FLRG…FYLG), 252–272 (IGLP…AFVA), and 276–296 (WFLA…PRIV).

It belongs to the UPF0182 family.

It is found in the cell membrane. This is UPF0182 protein Acid_6445 from Solibacter usitatus (strain Ellin6076).